A 402-amino-acid chain; its full sequence is Phosphoglycerate kinase (402 aa).

Substrate is bound by residues 24 to 26 (DFN), arginine 40, 63 to 66 (HFGR), arginine 122, and arginine 155. ATP is bound by residues lysine 206, glycine 297, glutamate 328, and 358-361 (GGDS).

This sequence belongs to the phosphoglycerate kinase family. Monomer.

It localises to the cytoplasm. The enzyme catalyses (2R)-3-phosphoglycerate + ATP = (2R)-3-phospho-glyceroyl phosphate + ADP. It functions in the pathway carbohydrate degradation; glycolysis; pyruvate from D-glyceraldehyde 3-phosphate: step 2/5. The protein is Phosphoglycerate kinase of Prochlorococcus marinus (strain MIT 9515).